The primary structure comprises 444 residues: Vacuolar protein sorting-associated protein 4B (444 aa).

Residues 4–82 (TSPNLQKAID…KEYLKNKEKK (79 aa)) form the MIT domain. Positions 19 to 82 (AQEDKAGNYE…KEYLKNKEKK (64 aa)) form a coiled coil. A compositionally biased stretch (basic and acidic residues) spans 78–88 (NKEKKAQKPVK). A disordered region spans residues 78 to 117 (NKEKKAQKPVKEGQPSPADEKGNDSDGEGESDDPEKKKLQ). Phosphoserine is present on residues Ser93, Ser102, and Ser108. 174-181 (GPPGTGKS) serves as a coordination point for ATP. Ser410 carries the post-translational modification Phosphoserine.

It belongs to the AAA ATPase family. In terms of assembly, proposed to be monomeric or homodimeric in nucleotide-free form and to oligomerize upon binding to ATP to form two stacked hexameric or heptameric rings with a central pore through which ESCRT-III substrates are translocated in an ATP-dependent manner. In vitro, associates on the inside of a helical tubular structure formed by a CHMP2A-CHMP3 polymer. Interacts with CHMP1A, CHMP1B, CHMP2A, CHMP4B and CHMP6. Interacts with VPS4A; the interaction suggests a heteromeric assembly with VPS4A. Interacts with VTA1.

It is found in the late endosome membrane. It catalyses the reaction ATP + H2O = ADP + phosphate + H(+). Involved in late steps of the endosomal multivesicular bodies (MVB) pathway. Recognizes membrane-associated ESCRT-III assemblies and catalyzes their disassembly, possibly in combination with membrane fission. Redistributes the ESCRT-III components to the cytoplasm for further rounds of MVB sorting. MVBs contain intraluminal vesicles (ILVs) that are generated by invagination and scission from the limiting membrane of the endosome and mostly are delivered to lysosomes enabling degradation of membrane proteins, such as stimulated growth factor receptors, lysosomal enzymes and lipids. VPS4A/B are required for the exosomal release of SDCBP, CD63 and syndecan. In terms of biological role, (Microbial infection) In conjunction with the ESCRT machinery also appears to function in topologically equivalent membrane fission events, such as the terminal stages of cytokinesis and enveloped virus budding (lentiviruses). This chain is Vacuolar protein sorting-associated protein 4B (VPS4B), found in Pongo abelii (Sumatran orangutan).